The chain runs to 49 residues: uncharacterized protein (49 aa).

A helical membrane pass occupies residues 5-25; sequence LTTIFSVVIVLAIFLYFGLLI.

This sequence belongs to the plectrovirus ORF12 protein family.

It is found in the host membrane. This is an uncharacterized protein from Spiroplasma virus SpV1-R8A2 B (SpV1).